Consider the following 263-residue polypeptide: 2-dehydro-3-deoxyphosphooctonate aldolase (263 aa).

This sequence belongs to the KdsA family.

It localises to the cytoplasm. The catalysed reaction is D-arabinose 5-phosphate + phosphoenolpyruvate + H2O = 3-deoxy-alpha-D-manno-2-octulosonate-8-phosphate + phosphate. Its pathway is carbohydrate biosynthesis; 3-deoxy-D-manno-octulosonate biosynthesis; 3-deoxy-D-manno-octulosonate from D-ribulose 5-phosphate: step 2/3. It participates in bacterial outer membrane biogenesis; lipopolysaccharide biosynthesis. The protein is 2-dehydro-3-deoxyphosphooctonate aldolase of Wolinella succinogenes (strain ATCC 29543 / DSM 1740 / CCUG 13145 / JCM 31913 / LMG 7466 / NCTC 11488 / FDC 602W) (Vibrio succinogenes).